The sequence spans 857 residues: Facilitated trehalose transporter Tret1-1 (857 aa).

2 disordered regions span residues 1 to 28 (MSGR…KLKE) and 62 to 203 (DPFL…KATS). Residues 1-392 (MSGRDSRGAG…VYRPTTNPIY (392 aa)) lie on the Cytoplasmic side of the membrane. Residues 69–81 (VSPQRHPQNTVRT) are compositionally biased toward polar residues. The span at 134–143 (EIREHRDRQQ) shows a compositional bias: basic and acidic residues. Residues 171–181 (GNSNTNSNKAA) are compositionally biased toward polar residues. A phosphoserine mark is found at Ser248, Ser249, Ser250, Ser320, and Ser322. The segment at 327-346 (LTSRQHFQQQRSISTDSRKS) is disordered. Residues 330–341 (RQHFQQQRSIST) show a composition bias toward polar residues. Residues 393–413 (IWTQVLAALSVSLGSLVVGFV) traverse the membrane as a helical segment. The Extracellular portion of the chain corresponds to 414-440 (SAYTSPALVSMTDRNITSFEVTQDAGS). Asn428 carries N-linked (GlcNAc...) asparagine glycosylation. A helical transmembrane segment spans residues 441–461 (WVGGIMPLAGLAGGIAGGPLI). Topologically, residues 462 to 473 (EYLGRRNTILAT) are cytoplasmic. Residues 474 to 494 (AVPFIVSSLLIACAVNVAMVL) traverse the membrane as a helical segment. Over 495–497 (CGR) the chain is Extracellular. A helical transmembrane segment spans residues 498–518 (FLAGFCVGIASLSLPVYLGET). The Cytoplasmic portion of the chain corresponds to 519–528 (VQPEVRGTLG). Residues 529–549 (LLPTAFGNIGILLCFVAGSFM) form a helical membrane-spanning segment. N-linked (GlcNAc...) asparagine glycosylation occurs at Asn550. Topologically, residues 550 to 552 (NWS) are extracellular. A helical membrane pass occupies residues 553-573 (MLAFLGAALPVPFLILMFLIP). Residues 574–636 (ETPRWFVGRG…ELFKRINLKP (63 aa)) are Cytoplasmic-facing. A helical membrane pass occupies residues 637-657 (LSISLGLMFFQQFSGINAVIF). Residues 658 to 673 (YTVQIFKDAGSTIDSN) lie on the Extracellular side of the membrane. The chain crosses the membrane as a helical span at residues 674–694 (LCTIIVGIVNFFATFMGILLI). The Cytoplasmic segment spans residues 695–700 (DRLGRK). Residues 701–721 (ILLYISDIAMILTLSILGGFF) form a helical membrane-spanning segment. The Extracellular portion of the chain corresponds to 722–740 (YCKAHGPDVSHLGWLPLTC). A helical membrane pass occupies residues 741–761 (FVIYILGFSLGFGPIPWLMMG). Residues 762-770 (EILPAKIRG) are Cytoplasmic-facing. A helical membrane pass occupies residues 771–791 (PAASVVTAFNWFCTFVVTKTF). Residues 792–801 (QDLTGAMGAH) are Extracellular-facing. A helical transmembrane segment spans residues 802–822 (GAFWLFGAICFVGLFFVIIYV). The Cytoplasmic segment spans residues 823-857 (PETQGKTLEDIERKMMGRVRRMSSVANIKPLSFNM). 2 positions are modified to phosphoserine: Ser845 and Ser846.

The protein belongs to the major facilitator superfamily. Sugar transporter (TC 2.A.1.1) family. Trehalose transporter subfamily.

The protein resides in the cell membrane. In terms of biological role, low-capacity facilitative transporter for trehalose. Does not transport maltose, sucrose or lactose. Mediates the bidirectional transfer of trehalose. Responsible for the transport of trehalose synthesized in the fat body and the incorporation of trehalose into other tissues that require a carbon source, thereby regulating trehalose levels in the hemolymph. The chain is Facilitated trehalose transporter Tret1-1 from Drosophila simulans (Fruit fly).